We begin with the raw amino-acid sequence, 251 residues long: Probable transcriptional regulatory protein MRA_2631 (251 aa).

It belongs to the TACO1 family.

It is found in the cytoplasm. The sequence is that of Probable transcriptional regulatory protein MRA_2631 from Mycobacterium tuberculosis (strain ATCC 25177 / H37Ra).